We begin with the raw amino-acid sequence, 279 residues long: MIEITLLGTGSPIPDPDRAGPSTLVRAGGQVFLVDCGRGVLQRAAAVGVGAAGLSAVLLTHLHSDHIAELGDVLITSWVTNFAADPAPLQVIGPPGTAETVDAMLKAFGRDIGYRIAHHADLNAPPPIEVHEYTDGTVWDRDGVAIRVAPTDHRPVAPTIGFRVEFDGASAVLAGDTVPCPSLDELAAGAGALVHTVIRKDIITNFPQQRVKDICDYHSSVQEAAATAARAGVGTLVMTHYVPAIIAGQEDQWRALAATEFGGRIELGNDLHRVEVHAR.

Zn(2+) is bound by residues His61, His63, Asp65, His66, His153, Asp176, and His240. Asp65 functions as the Proton acceptor in the catalytic mechanism.

The protein belongs to the RNase Z family. As to quaternary structure, homodimer. The cofactor is Zn(2+).

It catalyses the reaction Endonucleolytic cleavage of RNA, removing extra 3' nucleotides from tRNA precursor, generating 3' termini of tRNAs. A 3'-hydroxy group is left at the tRNA terminus and a 5'-phosphoryl group is left at the trailer molecule.. Its function is as follows. Zinc phosphodiesterase, which displays some tRNA 3'-processing endonuclease activity. Probably involved in tRNA maturation, by removing a 3'-trailer from precursor tRNA. In Mycobacterium marinum (strain ATCC BAA-535 / M), this protein is Ribonuclease Z.